A 74-amino-acid chain; its full sequence is Large ribosomal subunit protein bL31 (74 aa).

The protein belongs to the bacterial ribosomal protein bL31 family. Type A subfamily. As to quaternary structure, part of the 50S ribosomal subunit.

Binds the 23S rRNA. In Synechococcus sp. (strain JA-2-3B'a(2-13)) (Cyanobacteria bacterium Yellowstone B-Prime), this protein is Large ribosomal subunit protein bL31.